The following is a 412-amino-acid chain: Mitochondrial distribution and morphology protein 12 (412 aa).

Residues 1–410 (MSIDLEWAKL…FPNFHTLVMG (410 aa)) enclose the SMP-LTD domain. Disordered stretches follow at residues 66 to 96 (EDDE…DGYE), 108 to 136 (YTEG…SPTD), 166 to 238 (QGSG…QQEN), and 314 to 354 (PAGD…KPLP). The segment covering 220 to 238 (NQPVFPSQQPQQQQPQQEN) has biased composition (low complexity).

The protein belongs to the MDM12 family. In terms of assembly, component of the ER-mitochondria encounter structure (ERMES) or MDM complex, composed of MMM1, MDM10, MDM12 and MDM34. An MMM1 homodimer associates with one molecule of MDM12 on each side in a pairwise head-to-tail manner, and the SMP-LTD domains of MMM1 and MDM12 generate a continuous hydrophobic tunnel for phospholipid trafficking.

It localises to the mitochondrion outer membrane. It is found in the endoplasmic reticulum membrane. In terms of biological role, component of the ERMES/MDM complex, which serves as a molecular tether to connect the endoplasmic reticulum (ER) and mitochondria. Components of this complex are involved in the control of mitochondrial shape and protein biogenesis, and function in nonvesicular lipid trafficking between the ER and mitochondria. MDM12 is required for the interaction of the ER-resident membrane protein MMM1 and the outer mitochondrial membrane-resident beta-barrel protein MDM10. The MDM12-MMM1 subcomplex functions in the major beta-barrel assembly pathway that is responsible for biogenesis of all mitochondrial outer membrane beta-barrel proteins, and acts in a late step after the SAM complex. The MDM10-MDM12-MMM1 subcomplex further acts in the TOM40-specific pathway after the action of the MDM12-MMM1 complex. Essential for establishing and maintaining the structure of mitochondria and maintenance of mtDNA nucleoids. This chain is Mitochondrial distribution and morphology protein 12, found in Coprinopsis cinerea (strain Okayama-7 / 130 / ATCC MYA-4618 / FGSC 9003) (Inky cap fungus).